The sequence spans 194 residues: Peptidyl-tRNA hydrolase (194 aa).

Position 17 (tyrosine 17) interacts with tRNA. Catalysis depends on histidine 22, which acts as the Proton acceptor. 3 residues coordinate tRNA: tyrosine 68, asparagine 70, and asparagine 116.

It belongs to the PTH family. In terms of assembly, monomer.

Its subcellular location is the cytoplasm. It catalyses the reaction an N-acyl-L-alpha-aminoacyl-tRNA + H2O = an N-acyl-L-amino acid + a tRNA + H(+). Hydrolyzes ribosome-free peptidyl-tRNAs (with 1 or more amino acids incorporated), which drop off the ribosome during protein synthesis, or as a result of ribosome stalling. Its function is as follows. Catalyzes the release of premature peptidyl moieties from peptidyl-tRNA molecules trapped in stalled 50S ribosomal subunits, and thus maintains levels of free tRNAs and 50S ribosomes. This is Peptidyl-tRNA hydrolase from Pseudomonas syringae pv. tomato (strain ATCC BAA-871 / DC3000).